Reading from the N-terminus, the 120-residue chain is Ribosome-binding factor A (120 aa).

It belongs to the RbfA family. Monomer. Binds 30S ribosomal subunits, but not 50S ribosomal subunits or 70S ribosomes.

The protein resides in the cytoplasm. One of several proteins that assist in the late maturation steps of the functional core of the 30S ribosomal subunit. Associates with free 30S ribosomal subunits (but not with 30S subunits that are part of 70S ribosomes or polysomes). Required for efficient processing of 16S rRNA. May interact with the 5'-terminal helix region of 16S rRNA. This chain is Ribosome-binding factor A, found in Rickettsia africae (strain ESF-5).